The sequence spans 474 residues: Flotillin-like protein 3 (474 aa).

C35 carries the S-palmitoyl cysteine lipid modification. Coiled-coil stretches lie at residues 235-255 and 305-325; these read ENQR…KKAA and QYET…KEAE.

It belongs to the band 7/mec-2 family. Flotillin subfamily. In terms of processing, may be palmitoylated. As to expression, expressed in all plant organs. Primarily expressed in vascular tissues. No change in spatial expression in root upon inoculation. Expression limited to the nodule vascular tissue.

It is found in the cell membrane. It localises to the membrane. The protein localises to the caveola. Its function is as follows. May act as a scaffolding protein within caveolar membranes, functionally participating in formation of caveolae or caveolae-like vesicles. May be involved in nodule formation. This is Flotillin-like protein 3 (FLOT3) from Medicago truncatula (Barrel medic).